The sequence spans 477 residues: Bifunctional protein HldE (477 aa).

Residues 1–318 are ribokinase; that stretch reads MKVTLPEFER…ENAVRGRADT (318 aa). Residue K179 is modified to N6-acetyllysine. 195–198 lines the ATP pocket; sequence NLSE. D264 is an active-site residue. Positions 344-477 are cytidylyltransferase; the sequence is MTNGVFDILH…IKKIQQDKKG (134 aa).

In the N-terminal section; belongs to the carbohydrate kinase PfkB family. The protein in the C-terminal section; belongs to the cytidylyltransferase family. Homodimer.

The enzyme catalyses D-glycero-beta-D-manno-heptose 7-phosphate + ATP = D-glycero-beta-D-manno-heptose 1,7-bisphosphate + ADP + H(+). It carries out the reaction D-glycero-beta-D-manno-heptose 1-phosphate + ATP + H(+) = ADP-D-glycero-beta-D-manno-heptose + diphosphate. The protein operates within nucleotide-sugar biosynthesis; ADP-L-glycero-beta-D-manno-heptose biosynthesis; ADP-L-glycero-beta-D-manno-heptose from D-glycero-beta-D-manno-heptose 7-phosphate: step 1/4. Its pathway is nucleotide-sugar biosynthesis; ADP-L-glycero-beta-D-manno-heptose biosynthesis; ADP-L-glycero-beta-D-manno-heptose from D-glycero-beta-D-manno-heptose 7-phosphate: step 3/4. Its function is as follows. Catalyzes the phosphorylation of D-glycero-D-manno-heptose 7-phosphate at the C-1 position to selectively form D-glycero-beta-D-manno-heptose-1,7-bisphosphate. Catalyzes the ADP transfer from ATP to D-glycero-beta-D-manno-heptose 1-phosphate, yielding ADP-D-glycero-beta-D-manno-heptose. In Escherichia coli (strain 55989 / EAEC), this protein is Bifunctional protein HldE.